The chain runs to 513 residues: MDTTTTATQMLHLPSLPVLLSFLLFLLMLIRYWKNSNGQGKQPPGPKPLPILGNLHQLADGQPHHVMTKLCRKYGPVMKLKLGQLDAVIISSPEAAKEVLKTNEIKFAQRPEVYAVEIMSYDHSSIVFAPYGDYWREMRKISVLELLSNKRVQSFRSIREDEVWGLVEFISSNQGRPINLSEKIFTMTNDIIARAAFGRKNSDQHNFTVLLEEIMKIGAGFAIADLYPSLTFLRPLTGVKPALMRIQKKMDKILEDIVAEHKLKRKAAANNNVKLEEEDLVDTLLNYAEATNKNEFHLTIDQVKAVTLDIFSAGSETSATSMEWAMSELLKNPRVMKKAQEEVRQACKGKSKIQEADIQKLDYLKLVIKETFRLHAPGPFTPREAREKCEIRGYTIPAKAKILINLHAIGRDPTVWKDPECFRPERFEGSSTDFKGNHFELIPFGGGRRICPGISFATANIELGLAQLMYHFDWKLANGERLEDLDMSENFGMTARRKENLQVIATTRIPFEK.

A helical transmembrane segment spans residues 10–30 (MLHLPSLPVLLSFLLFLLMLI). Residue Cys-451 coordinates heme.

This sequence belongs to the cytochrome P450 family. It depends on heme as a cofactor. As to expression, accumulates in mature fruits and in juice vesicles.

The protein localises to the membrane. The catalysed reaction is dihydroniloticin + 2 reduced [NADPH--hemoprotein reductase] + 2 O2 = melianol + 2 oxidized [NADPH--hemoprotein reductase] + 3 H2O + 2 H(+). It functions in the pathway secondary metabolite biosynthesis; terpenoid biosynthesis. Functionally, monooxygenase involved in the biosynthesis of limonoids triterpene natural products such as limonin, a compound with insecticidal activity responsible for the bitter taste in citrus. Catalyzes the conversion of dihydroniloticin to the protolimonoid melianol. The protein is Melianol synthase CYP71BQ4 of Citrus sinensis (Sweet orange).